The primary structure comprises 93 residues: UPF0223 protein YfdD (93 aa).

This sequence belongs to the UPF0223 family.

In Lactococcus lactis subsp. lactis (strain IL1403) (Streptococcus lactis), this protein is UPF0223 protein YfdD (yfdD).